We begin with the raw amino-acid sequence, 400 residues long: Ribose-phosphate pyrophosphokinase 2, chloroplastic (400 aa).

A chloroplast-targeting transit peptide spans 1–44; it reads MASLALTSPPSVKIPSYLSSSSSSLFSRSSISFRTTESRSRICV. Residues D214, H216, D225, and D229 each coordinate Mg(2+). The binding of phosphoribosylpyrophosphate stretch occupies residues 300–315; sequence GKVAVMVDDIIDTAGT.

It belongs to the ribose-phosphate pyrophosphokinase family.

Its subcellular location is the plastid. It localises to the chloroplast. It catalyses the reaction D-ribose 5-phosphate + ATP = 5-phospho-alpha-D-ribose 1-diphosphate + AMP + H(+). This chain is Ribose-phosphate pyrophosphokinase 2, chloroplastic (PRS2), found in Arabidopsis thaliana (Mouse-ear cress).